A 470-amino-acid polypeptide reads, in one-letter code: Chromosomal replication initiator protein DnaA (470 aa).

The domain I, interacts with DnaA modulators stretch occupies residues 1 to 68 (MENFWSLCLG…SALAEEVLST (68 aa)). The domain II stretch occupies residues 68-133 (TPVQIELALY…KKPKTLTETS (66 aa)). Residues 134 to 350 (GLNPAFRFDN…GALNRIIAMA (217 aa)) are domain III, AAA+ region. ATP contacts are provided by Gly-178, Gly-180, Lys-181, and Thr-182. The tract at residues 351–470 (NFTGHAIDVS…IAVLIQVIRD (120 aa)) is domain IV, binds dsDNA.

Belongs to the DnaA family. As to quaternary structure, oligomerizes as a right-handed, spiral filament on DNA at oriC.

It localises to the cytoplasm. Plays an essential role in the initiation and regulation of chromosomal replication. ATP-DnaA binds to the origin of replication (oriC) to initiate formation of the DNA replication initiation complex once per cell cycle. Binds the DnaA box (a 9 base pair repeat at the origin) and separates the double-stranded (ds)DNA. Forms a right-handed helical filament on oriC DNA; dsDNA binds to the exterior of the filament while single-stranded (ss)DNA is stabiized in the filament's interior. The ATP-DnaA-oriC complex binds and stabilizes one strand of the AT-rich DNA unwinding element (DUE), permitting loading of DNA polymerase. After initiation quickly degrades to an ADP-DnaA complex that is not apt for DNA replication. Binds acidic phospholipids. The protein is Chromosomal replication initiator protein DnaA of Methylobacillus flagellatus (strain ATCC 51484 / DSM 6875 / VKM B-1610 / KT).